Here is a 398-residue protein sequence, read N- to C-terminus: 4-hydroxy-3-methylbut-2-en-1-yl diphosphate synthase (ferredoxin) (398 aa).

The [4Fe-4S] cluster site is built by Cys306, Cys309, Cys340, and Glu347.

The protein belongs to the IspG family. Requires [4Fe-4S] cluster as cofactor.

The catalysed reaction is (2E)-4-hydroxy-3-methylbut-2-enyl diphosphate + 2 oxidized [2Fe-2S]-[ferredoxin] + H2O = 2-C-methyl-D-erythritol 2,4-cyclic diphosphate + 2 reduced [2Fe-2S]-[ferredoxin] + H(+). Its pathway is isoprenoid biosynthesis; isopentenyl diphosphate biosynthesis via DXP pathway; isopentenyl diphosphate from 1-deoxy-D-xylulose 5-phosphate: step 5/6. In terms of biological role, converts 2C-methyl-D-erythritol 2,4-cyclodiphosphate (ME-2,4cPP) into 1-hydroxy-2-methyl-2-(E)-butenyl 4-diphosphate. This Synechococcus sp. (strain CC9605) protein is 4-hydroxy-3-methylbut-2-en-1-yl diphosphate synthase (ferredoxin).